The sequence spans 65 residues: Alpha-toxin BeM10 (65 aa).

One can recognise an LCN-type CS-alpha/beta domain in the interval 2–65 (RDGYIADDKD…IKQKVSGKCN (64 aa)). Disulfide bonds link cysteine 12–cysteine 64, cysteine 16–cysteine 35, cysteine 22–cysteine 45, and cysteine 26–cysteine 47.

Belongs to the long (4 C-C) scorpion toxin superfamily. Sodium channel inhibitor family. Alpha subfamily. Expressed by the venom gland.

The protein resides in the secreted. Alpha toxins bind voltage-independently at site-3 of sodium channels (Nav) and inhibit the inactivation of the activated channels, thereby blocking neuronal transmission. Has paralytic activity in mice. The sequence is that of Alpha-toxin BeM10 from Mesobuthus eupeus (Lesser Asian scorpion).